Here is a 188-residue protein sequence, read N- to C-terminus: ATP synthase subunit delta (188 aa).

Belongs to the ATPase delta chain family. As to quaternary structure, F-type ATPases have 2 components, F(1) - the catalytic core - and F(0) - the membrane proton channel. F(1) has five subunits: alpha(3), beta(3), gamma(1), delta(1), epsilon(1). F(0) has three main subunits: a(1), b(2) and c(10-14). The alpha and beta chains form an alternating ring which encloses part of the gamma chain. F(1) is attached to F(0) by a central stalk formed by the gamma and epsilon chains, while a peripheral stalk is formed by the delta and b chains.

The protein localises to the cell inner membrane. Its function is as follows. F(1)F(0) ATP synthase produces ATP from ADP in the presence of a proton or sodium gradient. F-type ATPases consist of two structural domains, F(1) containing the extramembraneous catalytic core and F(0) containing the membrane proton channel, linked together by a central stalk and a peripheral stalk. During catalysis, ATP synthesis in the catalytic domain of F(1) is coupled via a rotary mechanism of the central stalk subunits to proton translocation. This protein is part of the stalk that links CF(0) to CF(1). It either transmits conformational changes from CF(0) to CF(1) or is implicated in proton conduction. The chain is ATP synthase subunit delta from Agrobacterium fabrum (strain C58 / ATCC 33970) (Agrobacterium tumefaciens (strain C58)).